A 1308-amino-acid chain; its full sequence is Spermatogenesis-associated protein 31F1B (1308 aa).

A helical transmembrane segment spans residues 7–27 (FLWDTECPLYVYFCFFIIVLI). Disordered stretches follow at residues 464 to 488 (SPPIPLPEAAPPPSSTSPNESLDEP), 627 to 648 (SQPGKPEAYGSGDTFLPTAGKG), 844 to 863 (HGAQGHGRTEKVPPERQPLL), 902 to 927 (PTATDLESESVQEPLGSPRESTLLQG), 1005 to 1026 (FSTESQSPGKSKSGYVPTVAGK), 1084 to 1190 (GACP…AGLK), and 1204 to 1254 (MKSK…PKAQ). Residues 465–478 (PPIPLPEAAPPPSS) show a composition bias toward pro residues. A compositionally biased stretch (acidic residues) spans 1107 to 1117 (METDSEQDMED).

The protein belongs to the SPATA31 family.

It localises to the membrane. The polypeptide is Spermatogenesis-associated protein 31F1B (Mus musculus (Mouse)).